Consider the following 396-residue polypeptide: Calreticulin (396 aa).

An N-terminal signal peptide occupies residues 1–15; the sequence is MKSLCLLAIVAVVSA. A disulfide bond links Cys-101 and Cys-133. 4 residues coordinate an alpha-D-glucoside: Tyr-105, Lys-107, Tyr-124, and Asp-131. 7 consecutive repeat copies span residues 186–197, 205–216, 222–233, 239–250, 254–264, 268–278, and 282–292. The tract at residues 186–250 is 4 X approximate repeats; sequence AQTGSLEEDW…DAKKPEDWDD (65 aa). The segment at 193 to 301 is P-domain; that stretch reads EDWDLLPAKK…PEYTPDDELY (109 aa). Basic and acidic residues predominate over residues 202–212; sequence KIKDPDAKKPE. Positions 202–250 are disordered; the sequence is KIKDPDAKKPEDWDEREYIDDAEDVKPEDWEKPEHIPDPDAKKPEDWDD. Residues 213–224 are compositionally biased toward acidic residues; that stretch reads DWDEREYIDDAE. Residues 225–246 show a composition bias toward basic and acidic residues; the sequence is DVKPEDWEKPEHIPDPDAKKPE. The 3 X approximate repeats stretch occupies residues 254–292; sequence GEWEPPMIDNPEYKGEWKPKQIKNPAYKGKWIHPEIENP. Positions 302-396 are C-domain; the sequence is LYENWGAIGF…KEEEEGHDEL (95 aa). An alpha-D-glucoside is bound at residue Asp-312. Residues 342-380 show a composition bias toward basic and acidic residues; that stretch reads FDKLKTVEKEKKEKADEEARKVEEEARKKAEEEKEAKKD. The tract at residues 342–396 is disordered; that stretch reads FDKLKTVEKEKKEKADEEARKVEEEARKKAEEEKEAKKDDDEEEEKEEEEGHDEL. Over residues 381 to 396 the composition is skewed to acidic residues; sequence DDEEEEKEEEEGHDEL. The short motif at 393-396 is the Prevents secretion from ER element; it reads HDEL.

Belongs to the calreticulin family.

Its subcellular location is the endoplasmic reticulum lumen. Its function is as follows. Molecular calcium-binding chaperone promoting folding, oligomeric assembly and quality control in the ER via the calreticulin/calnexin cycle. This lectin may interact transiently with almost all of the monoglucosylated glycoproteins that are synthesized in the ER. Probably by controlling the folding of extracellular matrix protein unc-52/Perlecan, may play a role in the formation of fibrous organelles, a hemidesmosome-like structure attaching muscles to the epidermis. Protects dopaminergic neurons against oxidative stress-induced neurodegeneration. The chain is Calreticulin (crt-1) from Caenorhabditis briggsae.